Consider the following 1097-residue polypeptide: DNA-directed RNA polymerase subunit beta (1097 aa).

Positions 1072 to 1097 are disordered; that stretch reads QDVNPRRSTPSRPTYESLGVADYDED.

It belongs to the RNA polymerase beta chain family. In cyanobacteria the RNAP catalytic core is composed of 2 alpha, 1 beta, 1 beta', 1 gamma and 1 omega subunit. When a sigma factor is associated with the core the holoenzyme is formed, which can initiate transcription.

The catalysed reaction is RNA(n) + a ribonucleoside 5'-triphosphate = RNA(n+1) + diphosphate. Its function is as follows. DNA-dependent RNA polymerase catalyzes the transcription of DNA into RNA using the four ribonucleoside triphosphates as substrates. In Synechococcus sp. (strain CC9902), this protein is DNA-directed RNA polymerase subunit beta.